The following is a 298-amino-acid chain: uncharacterized protein (298 aa).

Helical transmembrane passes span 10 to 30 (VIYTAVSFIMWGLFPLYWKLL), 36 to 56 (LDILAHRIIWSFVFMCIVLFF), 76 to 96 (ILSLFLASILISINWFVYIWA), 101 to 121 (FLLEASLGYYINPLVSVLLGI), 142 to 162 (GVIISAFQYGSIPYVALLLAF), 179 to 199 (AIGLTLETFMIMPIALGYLLF), 212 to 232 (GTWLLLFLAGVFTALPLLLFA), 243 to 263 (VGILQYIAPTITLLIGLFVYH), and 271 to 291 (AFTFSCIWAALLLFTFSQVKW). EamA domains are found at residues 17-148 (FIMW…ISAF) and 162-286 (FSFG…LFTF).

The protein belongs to the EamA transporter family.

Its subcellular location is the cell membrane. This is an uncharacterized protein from Bacillus subtilis (strain 168).